We begin with the raw amino-acid sequence, 268 residues long: Protein c-ets-1-B (268 aa).

The helix HI-1 stretch occupies residues 131 to 139; that stretch reads FKDYVRDRA. The segment at 150–157 is helix HI-2; the sequence is AAALAGYT. The segment at residues 162 to 242 is a DNA-binding region (ETS); it reads IQLWQFLLEL…AGKRYVYRFV (81 aa). The tract at residues 245–249 is helix H4; it reads LQSLL. A helix H5 region spans residues 253-259; it reads PEELHAM.

It belongs to the ETS family. In terms of assembly, binds DNA as a homodimer; homodimerization is required for transcription activation.

It is found in the nucleus. The protein localises to the cytoplasm. With respect to regulation, autoinhibited by a module composed of four alpha helices (HI-1, HI-2, H4, and H5) that flank the DNA-binding ETS domain, reducing the affinity for DNA. In terms of biological role, transcription factor. Directly controls the expression of cytokine and chemokine genes in a wide variety of different cellular contexts. In Xenopus laevis (African clawed frog), this protein is Protein c-ets-1-B (ets1-b).